A 223-amino-acid chain; its full sequence is UPF0758 protein HD_0732 (223 aa).

The MPN domain maps to 98 to 220; the sequence is TINTPHLAIM…YFSFEEERFH (123 aa). Positions 169, 171, and 182 each coordinate Zn(2+). A JAMM motif motif is present at residues 169–182; sequence HNHPSGNCTASQAD.

The protein belongs to the UPF0758 family.

The sequence is that of UPF0758 protein HD_0732 from Haemophilus ducreyi (strain 35000HP / ATCC 700724).